Consider the following 438-residue polypeptide: Thymidine phosphorylase (438 aa).

This sequence belongs to the thymidine/pyrimidine-nucleoside phosphorylase family. Homodimer.

The catalysed reaction is thymidine + phosphate = 2-deoxy-alpha-D-ribose 1-phosphate + thymine. The protein operates within pyrimidine metabolism; dTMP biosynthesis via salvage pathway; dTMP from thymine: step 1/2. Its function is as follows. The enzymes which catalyze the reversible phosphorolysis of pyrimidine nucleosides are involved in the degradation of these compounds and in their utilization as carbon and energy sources, or in the rescue of pyrimidine bases for nucleotide synthesis. In Colwellia psychrerythraea (strain 34H / ATCC BAA-681) (Vibrio psychroerythus), this protein is Thymidine phosphorylase.